Consider the following 240-residue polypeptide: Bactofilin BacP (240 aa).

Positions 116–240 (DVEPGRLPAE…KKVVVKKKTR (125 aa)) are interacts with PadC. A disordered region spans residues 117-240 (VEPGRLPAER…KKVVVKKKTR (124 aa)). A compositionally biased stretch (low complexity) spans 126 to 150 (RPAVVRPTAVTRPTATPARPTIPAA). A compositionally biased stretch (pro residues) spans 151–173 (RPMPPPPPSRPTPPPPPARPSAP). Over residues 229–240 (AKKKVVVKKKTR) the composition is skewed to basic residues.

It belongs to the bactofilin family. As to quaternary structure, interacts with BacN and probably also BacO, the 3 proteins colocalize as an extended structure. Interacts with PadC.

Its subcellular location is the cytoplasm. It localises to the cytoskeleton. Functionally, a non-essential component of the chromosome segregation machinery. Positions the ParA-ParB-parS chromosome segregation machinery within the cell; BacP seems to be the most important bactofilin in this process. Forms a heteropolymeric, subpolar scaffold in the cell; BacP probably forms the core, BacO contributes to position and integrity while BacN does not seem to contribute to assembly. This chain is Bactofilin BacP, found in Myxococcus xanthus (strain DK1622).